Here is a 136-residue protein sequence, read N- to C-terminus: MLQPKRTKFRKVHKGRNRGIAGGTEVSFGTFGLKAVGRCRLTARQIEAARRAMTRAVKRQGKIWIRVFPDKPITEKPLEVRMGKGKGNVEYWVALIQPGKVLYEMDGVSEEIARHAFALAAAKLPVKTTFVTKTVM.

It belongs to the universal ribosomal protein uL16 family. In terms of assembly, part of the 50S ribosomal subunit.

In terms of biological role, binds 23S rRNA and is also seen to make contacts with the A and possibly P site tRNAs. The chain is Large ribosomal subunit protein uL16 from Actinobacillus pleuropneumoniae serotype 5b (strain L20).